The following is a 165-amino-acid chain: Thiol peroxidase (165 aa).

Residues 18–165 (PQVGDVVTDF…PNYDAALAVL (148 aa)) form the Thioredoxin domain. C60 serves as the catalytic Cysteine sulfenic acid (-SOH) intermediate. Residues C60 and C94 are joined by a disulfide bond.

Belongs to the peroxiredoxin family. Tpx subfamily. In terms of assembly, homodimer.

The enzyme catalyses a hydroperoxide + [thioredoxin]-dithiol = an alcohol + [thioredoxin]-disulfide + H2O. Its function is as follows. Thiol-specific peroxidase that catalyzes the reduction of hydrogen peroxide and organic hydroperoxides to water and alcohols, respectively. Plays a role in cell protection against oxidative stress by detoxifying peroxides. The sequence is that of Thiol peroxidase from Pasteurella multocida (strain Pm70).